The sequence spans 579 residues: Nuclear hormone receptor family member nhr-47 (579 aa).

The segment at residues 8 to 83 is a DNA-binding region (nuclear receptor); sequence GTLCAVCDDI…VGMDKNSIQN (76 aa). 2 NR C4-type zinc fingers span residues 11-31 and 47-71; these read CAVC…CNGC and CQGN…LQKC. The interval 87 to 128 is disordered; it reads RIGYTKRKRRHDDNDMEGGVHHSEHIRDGSSGSPQMNDESPE. The segment covering 104–114 has biased composition (basic and acidic residues); sequence GGVHHSEHIRD. One can recognise an NR LBD domain in the interval 164 to 553; it reads ADLHSYATLE…SLVKETSLGP (390 aa).

Belongs to the nuclear hormone receptor family.

It is found in the nucleus. Functionally, orphan nuclear receptor. This chain is Nuclear hormone receptor family member nhr-47 (nhr-47), found in Caenorhabditis elegans.